A 736-amino-acid chain; its full sequence is 1,4-alpha-glucan branching enzyme GlgB (736 aa).

The Nucleophile role is filled by D419. The active-site Proton donor is the E472.

This sequence belongs to the glycosyl hydrolase 13 family. GlgB subfamily. In terms of assembly, monomer.

It catalyses the reaction Transfers a segment of a (1-&gt;4)-alpha-D-glucan chain to a primary hydroxy group in a similar glucan chain.. Its pathway is glycan biosynthesis; glycogen biosynthesis. Its function is as follows. Catalyzes the formation of the alpha-1,6-glucosidic linkages in glycogen by scission of a 1,4-alpha-linked oligosaccharide from growing alpha-1,4-glucan chains and the subsequent attachment of the oligosaccharide to the alpha-1,6 position. The sequence is that of 1,4-alpha-glucan branching enzyme GlgB from Rhizobium meliloti (strain 1021) (Ensifer meliloti).